The primary structure comprises 1052 residues: Ubiquitin-like modifier-activating enzyme 6 (1052 aa).

Residue M1 is modified to N-acetylmethionine. Residues 1–21 (MEGSEPVAAHQGEEASCSSWG) are disordered. R46 is an ATP binding site. T54 bears the Phosphothreonine mark. Position 301 is a phosphoserine (S301). The ATP site is built by A470 and D497. Mg(2+) is bound by residues D499 and E502. ATP-binding residues include N505, R508, Q509, and K521. At K544 the chain carries N6-acetyllysine. V545 contacts ATP. D569 lines the Mg(2+) pocket. Residue N570 coordinates ATP. C625 (glycyl thioester intermediate) is an active-site residue. K729 is subject to N6-acetyllysine. Residue S737 is modified to Phosphoserine.

The protein belongs to the ubiquitin-activating E1 family. Forms a thioester with UBD in cells stimulated with tumor necrosis factor-alpha (TNFa) and interferon-gamma (IFNg). In terms of tissue distribution, widely expressed. Isoform 2 is predominantly expressed in testis with higher expression in adult testis than in fetal testis.

It catalyses the reaction ATP + ubiquitin + [E1 ubiquitin-activating enzyme]-L-cysteine = AMP + diphosphate + S-ubiquitinyl-[E1 ubiquitin-activating enzyme]-L-cysteine.. It functions in the pathway protein modification; protein ubiquitination. Its function is as follows. Activates ubiquitin by first adenylating its C-terminal glycine residue with ATP, and thereafter linking this residue to the side chain of a cysteine residue in E1, yielding a ubiquitin-E1 thioester and free AMP. Specific for ubiquitin, does not activate ubiquitin-like peptides. Also activates UBD/FAT10 conjugation via adenylation of its C-terminal glycine. Differs from UBE1 in its specificity for substrate E2 charging. Does not charge cell cycle E2s, such as CDC34. Essential for embryonic development. Isoform 2 may play a key role in ubiquitin system and may influence spermatogenesis and male fertility. The protein is Ubiquitin-like modifier-activating enzyme 6 (UBA6) of Homo sapiens (Human).